The sequence spans 119 residues: EF-hand calcium-binding domain-containing protein 2 (119 aa).

The N-terminal stretch at M1 to S22 is a signal peptide. An EF-hand domain is found at V82–L117. The Ca(2+) site is built by D95, D97, D99, and E106.

Component of the acid-soluble organic matrix of calcified layers of the shell (at protein level).

The protein localises to the secreted. The protein is EF-hand calcium-binding domain-containing protein 2 of Lottia gigantea (Giant owl limpet).